Consider the following 120-residue polypeptide: NAD(P)H-quinone oxidoreductase subunit 3 (120 aa).

The next 3 helical transmembrane spans lie at 6 to 26 (GYEYFLGFLLISGAVPILALT), 64 to 84 (MFALVFVIFDVETVFLYPWAV), and 89 to 109 (LGLLAFIEALVFITILVVALA).

It belongs to the complex I subunit 3 family. As to quaternary structure, NDH-1 can be composed of about 15 different subunits; different subcomplexes with different compositions have been identified which probably have different functions.

Its subcellular location is the cellular thylakoid membrane. It catalyses the reaction a plastoquinone + NADH + (n+1) H(+)(in) = a plastoquinol + NAD(+) + n H(+)(out). The catalysed reaction is a plastoquinone + NADPH + (n+1) H(+)(in) = a plastoquinol + NADP(+) + n H(+)(out). Functionally, NDH-1 shuttles electrons from an unknown electron donor, via FMN and iron-sulfur (Fe-S) centers, to quinones in the respiratory and/or the photosynthetic chain. The immediate electron acceptor for the enzyme in this species is believed to be plastoquinone. Couples the redox reaction to proton translocation, and thus conserves the redox energy in a proton gradient. Cyanobacterial NDH-1 also plays a role in inorganic carbon-concentration. In Prochlorococcus marinus (strain NATL1A), this protein is NAD(P)H-quinone oxidoreductase subunit 3.